The primary structure comprises 730 residues: UvrABC system protein C (730 aa).

A GIY-YIG domain is found at 16 to 95 (AAPGVYKFRD…IKEFDPRFNV (80 aa)). The UVR domain occupies 208–243 (DKLVKDLEKRMQQASEDLDFETAARLRDDIGALRKA). Residues 678–730 (ARALPAAVGDDELDKESESSVTSADAPSAESGSGDEGSESRELSMPTTGPSAQ) form a disordered region.

This sequence belongs to the UvrC family. In terms of assembly, interacts with UvrB in an incision complex.

The protein localises to the cytoplasm. Its function is as follows. The UvrABC repair system catalyzes the recognition and processing of DNA lesions. UvrC both incises the 5' and 3' sides of the lesion. The N-terminal half is responsible for the 3' incision and the C-terminal half is responsible for the 5' incision. In Rhodococcus erythropolis (strain PR4 / NBRC 100887), this protein is UvrABC system protein C.